The primary structure comprises 138 residues: Acidic phospholipase A2 PL1 (138 aa).

An N-terminal signal peptide occupies residues 1–16 (MRALWIVAVCLIGAEG). Cystine bridges form between Cys-42-Cys-131, Cys-44-Cys-60, Cys-59-Cys-111, Cys-65-Cys-138, Cys-66-Cys-104, Cys-73-Cys-97, and Cys-91-Cys-102. Ca(2+) is bound by residues Tyr-43, Gly-45, and Gly-47. Residue His-63 is part of the active site. Residue Asp-64 coordinates Ca(2+). Asp-105 is an active-site residue.

Belongs to the phospholipase A2 family. Group II subfamily. D49 sub-subfamily. Requires Ca(2+) as cofactor. In terms of tissue distribution, expressed by the venom gland.

It is found in the secreted. It catalyses the reaction a 1,2-diacyl-sn-glycero-3-phosphocholine + H2O = a 1-acyl-sn-glycero-3-phosphocholine + a fatty acid + H(+). PLA2 catalyzes the calcium-dependent hydrolysis of the 2-acyl groups in 3-sn-phosphoglycerides. This is Acidic phospholipase A2 PL1 from Vipera renardi (Steppe viper).